The following is a 250-amino-acid chain: Acetylglutamate kinase (250 aa).

Substrate contacts are provided by residues 41 to 42 (GG), R63, and N156.

This sequence belongs to the acetylglutamate kinase family. ArgB subfamily.

The protein localises to the cytoplasm. It carries out the reaction N-acetyl-L-glutamate + ATP = N-acetyl-L-glutamyl 5-phosphate + ADP. Its pathway is amino-acid biosynthesis; L-arginine biosynthesis; N(2)-acetyl-L-ornithine from L-glutamate: step 2/4. In terms of biological role, catalyzes the ATP-dependent phosphorylation of N-acetyl-L-glutamate. The protein is Acetylglutamate kinase of Listeria monocytogenes serotype 4b (strain F2365).